The sequence spans 446 residues: Scytalone dehydratase-like protein Arp1 (446 aa).

Tyr323 lines the substrate pocket. Catalysis depends on residues His358 and His383. Asn404 is a substrate binding site.

The protein belongs to the scytalone dehydratase family. As to quaternary structure, homotrimer. Each subunit contains an active site, located in the central part of the hydrophobic core of the monomer, which functions independently.

In terms of biological role, scytalone dehydratase-like protein; part of the Pks2 gene cluster that mediates the formation of infectious structures (appressoria), enabling these fungi to kill insects faster. The product of the Pks2 gene cluster is different from the one of Pks1 and has still not been identified. This chain is Scytalone dehydratase-like protein Arp1, found in Metarhizium acridum (strain CQMa 102).